A 70-amino-acid polypeptide reads, in one-letter code: Small, acid-soluble spore protein 1 (70 aa).

Belongs to the alpha/beta-type SASP family.

In terms of biological role, SASP are bound to spore DNA. They are double-stranded DNA-binding proteins that cause DNA to change to an a-like conformation. They protect the DNA backbone from chemical and enzymatic cleavage and are thus involved in dormant spore's high resistance to UV light. The sequence is that of Small, acid-soluble spore protein 1 (sasP-1) from Bacillus cereus.